The following is a 115-amino-acid chain: Large ribosomal subunit protein bL19 (115 aa).

The protein belongs to the bacterial ribosomal protein bL19 family.

Its function is as follows. This protein is located at the 30S-50S ribosomal subunit interface and may play a role in the structure and function of the aminoacyl-tRNA binding site. The chain is Large ribosomal subunit protein bL19 from Tropheryma whipplei (strain TW08/27) (Whipple's bacillus).